The sequence spans 154 residues: Spermatogenesis-associated protein 19, mitochondrial (154 aa).

A mitochondrion-targeting transit peptide spans 1–24 (MIITTWIVYILARKGAGLPFPPKV). Phosphoserine is present on residues Ser26 and Ser116.

It localises to the mitochondrion outer membrane. The protein resides in the mitochondrion. Its subcellular location is the cell projection. The protein localises to the cilium. It is found in the flagellum. Functionally, essential for sperm motility and male fertility. Plays an important role in sperm motility by regulating the organization and function of the mitochondria and is also required for correct sperm midpiece assembly. This chain is Spermatogenesis-associated protein 19, mitochondrial (SPATA19), found in Bos taurus (Bovine).